The following is a 254-amino-acid chain: PF03932 family protein CutC (254 aa).

Belongs to the CutC family.

It is found in the cytoplasm. This is PF03932 family protein CutC from Yersinia enterocolitica serotype O:8 / biotype 1B (strain NCTC 13174 / 8081).